A 761-amino-acid polypeptide reads, in one-letter code: Phosphoribosylformylglycinamidine synthase subunit PurL (761 aa).

Residues 1 to 13 (MTSRVDTVDNAAS) show a composition bias toward polar residues. Positions 1 to 23 (MTSRVDTVDNAASTPDHPQPFAE) are disordered. Histidine 57 is a catalytic residue. Residues tyrosine 60 and lysine 104 each contribute to the ATP site. Glutamate 106 is a Mg(2+) binding site. Substrate is bound by residues 107–110 (SHNH) and arginine 129. Catalysis depends on histidine 108, which acts as the Proton acceptor. Aspartate 130 lines the Mg(2+) pocket. Substrate is bound at residue glutamine 259. Residue aspartate 287 coordinates Mg(2+). 331 to 333 (ESQ) contacts substrate. 2 residues coordinate ATP: asparagine 519 and glycine 556. Mg(2+) is bound at residue asparagine 557. Residue serine 559 coordinates substrate.

This sequence belongs to the FGAMS family. In terms of assembly, monomer. Part of the FGAM synthase complex composed of 1 PurL, 1 PurQ and 2 PurS subunits.

The protein localises to the cytoplasm. The enzyme catalyses N(2)-formyl-N(1)-(5-phospho-beta-D-ribosyl)glycinamide + L-glutamine + ATP + H2O = 2-formamido-N(1)-(5-O-phospho-beta-D-ribosyl)acetamidine + L-glutamate + ADP + phosphate + H(+). It participates in purine metabolism; IMP biosynthesis via de novo pathway; 5-amino-1-(5-phospho-D-ribosyl)imidazole from N(2)-formyl-N(1)-(5-phospho-D-ribosyl)glycinamide: step 1/2. Its function is as follows. Part of the phosphoribosylformylglycinamidine synthase complex involved in the purines biosynthetic pathway. Catalyzes the ATP-dependent conversion of formylglycinamide ribonucleotide (FGAR) and glutamine to yield formylglycinamidine ribonucleotide (FGAM) and glutamate. The FGAM synthase complex is composed of three subunits. PurQ produces an ammonia molecule by converting glutamine to glutamate. PurL transfers the ammonia molecule to FGAR to form FGAM in an ATP-dependent manner. PurS interacts with PurQ and PurL and is thought to assist in the transfer of the ammonia molecule from PurQ to PurL. This Mycobacteroides abscessus (strain ATCC 19977 / DSM 44196 / CCUG 20993 / CIP 104536 / JCM 13569 / NCTC 13031 / TMC 1543 / L948) (Mycobacterium abscessus) protein is Phosphoribosylformylglycinamidine synthase subunit PurL.